A 349-amino-acid chain; its full sequence is Isopentenyl-diphosphate delta-isomerase (349 aa).

Residue 6-7 (RK) participates in substrate binding. FMN contacts are provided by residues 62–64 (AMT), Ser93, and Asn122. Residue Gln152 participates in substrate binding. Glu153 lines the Mg(2+) pocket. FMN contacts are provided by residues Lys184, Thr214, 258–259 (GG), and 280–281 (AG).

It belongs to the IPP isomerase type 2 family. In terms of assembly, homooctamer. Dimer of tetramers. The cofactor is FMN. NADPH serves as cofactor. Requires Mg(2+) as cofactor.

The protein resides in the cytoplasm. It catalyses the reaction isopentenyl diphosphate = dimethylallyl diphosphate. Functionally, involved in the biosynthesis of isoprenoids. Catalyzes the 1,3-allylic rearrangement of the homoallylic substrate isopentenyl (IPP) to its allylic isomer, dimethylallyl diphosphate (DMAPP). The polypeptide is Isopentenyl-diphosphate delta-isomerase (Bacillus cytotoxicus (strain DSM 22905 / CIP 110041 / 391-98 / NVH 391-98)).